The primary structure comprises 364 residues: Aminomethyltransferase (364 aa).

This sequence belongs to the GcvT family. The glycine cleavage system is composed of four proteins: P, T, L and H.

It carries out the reaction N(6)-[(R)-S(8)-aminomethyldihydrolipoyl]-L-lysyl-[protein] + (6S)-5,6,7,8-tetrahydrofolate = N(6)-[(R)-dihydrolipoyl]-L-lysyl-[protein] + (6R)-5,10-methylene-5,6,7,8-tetrahydrofolate + NH4(+). The glycine cleavage system catalyzes the degradation of glycine. The polypeptide is Aminomethyltransferase (Desulforamulus reducens (strain ATCC BAA-1160 / DSM 100696 / MI-1) (Desulfotomaculum reducens)).